The sequence spans 246 residues: Probable phosphatase AHA_1344 (246 aa).

H8, H10, H16, H41, E74, H102, H132, D193, and H195 together coordinate Zn(2+).

It belongs to the PHP family. Zn(2+) serves as cofactor.

The chain is Probable phosphatase AHA_1344 from Aeromonas hydrophila subsp. hydrophila (strain ATCC 7966 / DSM 30187 / BCRC 13018 / CCUG 14551 / JCM 1027 / KCTC 2358 / NCIMB 9240 / NCTC 8049).